The following is a 129-amino-acid chain: UPF0102 protein Mrad2831_2938 (129 aa).

The protein belongs to the UPF0102 family.

This Methylobacterium radiotolerans (strain ATCC 27329 / DSM 1819 / JCM 2831 / NBRC 15690 / NCIMB 10815 / 0-1) protein is UPF0102 protein Mrad2831_2938.